Reading from the N-terminus, the 421-residue chain is tRNA (guanine-N(7)-)-methyltransferase non-catalytic subunit TRM82 (421 aa).

WD repeat units follow at residues 72-112 (AVYS…EDPE), 170-212 (GHVS…IVDK), and 216-258 (GHKE…SQYS).

Belongs to the WD repeat TRM82 family. In terms of assembly, forms a heterodimer with the catalytic subunit TRM8.

The protein resides in the nucleus. The protein operates within tRNA modification; N(7)-methylguanine-tRNA biosynthesis. Functionally, required for the formation of N(7)-methylguanine at position 46 (m7G46) in tRNA. In the complex, it is required to stabilize and induce conformational changes of the catalytic subunit. This chain is tRNA (guanine-N(7)-)-methyltransferase non-catalytic subunit TRM82, found in Candida glabrata (strain ATCC 2001 / BCRC 20586 / JCM 3761 / NBRC 0622 / NRRL Y-65 / CBS 138) (Yeast).